Reading from the N-terminus, the 133-residue chain is Agouti-signaling protein (133 aa).

The N-terminal stretch at 1–22 (MDVIHLFLATLLVSLCFLTAYS) is a signal peptide. The span at 26–36 (PEEKPKDDRSL) shows a compositional bias: basic and acidic residues. The tract at residues 26-83 (PEEKPKDDRSLRNNSSMNLLDSPSVSIMALNKKSKKISRKEAEKKKRSSKKKASMTKV) is disordered. A compositionally biased stretch (polar residues) spans 37–50 (RNNSSMNLLDSPSV). Residues Asn38 and Asn39 are each glycosylated (N-linked (GlcNAc...) asparagine). Residues 70–79 (KKRSSKKKAS) show a composition bias toward basic residues. 5 disulfide bridges follow: Cys94-Cys109, Cys101-Cys115, Cys108-Cys126, Cys112-Cys133, and Cys117-Cys124. An Agouti domain is found at 94 to 133 (CVATRDSCKPPAPACCDPCASCQCRFFRSACSCRVLTRTC).

The protein resides in the secreted. Functionally, involved in the regulation of melanogenesis. The binding of ASP to MC1R precludes alpha-MSH initiated signaling and thus blocks production of cAMP, leading to a down-regulation of eumelanogenesis (brown/black pigment) and thus increasing synthesis of pheomelanin (yellow/red pigment). This chain is Agouti-signaling protein (ASIP), found in Equus caballus (Horse).